A 269-amino-acid polypeptide reads, in one-letter code: Type 4 prepilin-like proteins leader peptide-processing enzyme (269 aa).

7 consecutive transmembrane segments (helical) span residues 13 to 33 (MPVL…VVIW), 102 to 122 (YPLV…VWPE), 124 to 144 (GWAL…VIDL), 147 to 167 (QWLP…AAWA), 178 to 198 (VTGV…AGIV), 210 to 230 (LLFA…VALI), and 249 to 269 (LPFG…QALF).

The protein belongs to the peptidase A24 family.

It is found in the cell inner membrane. It carries out the reaction Typically cleaves a -Gly-|-Phe- bond to release an N-terminal, basic peptide of 5-8 residues from type IV prepilin, and then N-methylates the new N-terminal amino group, the methyl donor being S-adenosyl-L-methionine.. In terms of biological role, cleaves type-4 fimbrial leader sequence and methylates the N-terminal (generally Phe) residue. The protein is Type 4 prepilin-like proteins leader peptide-processing enzyme of Escherichia coli O78:H11 (strain H10407 / ETEC).